Consider the following 623-residue polypeptide: Aspartate--tRNA(Asp/Asn) ligase (623 aa).

Glu-175 lines the L-aspartate pocket. Residues 199-202 (QQYK) form an aspartate region. L-aspartate-binding residues include Arg-221 and His-483. Position 221–223 (221–223 (RDE)) interacts with ATP. Glu-517 is a binding site for ATP. Arg-524 is an L-aspartate binding site. Residue 569–572 (GVDR) coordinates ATP.

It belongs to the class-II aminoacyl-tRNA synthetase family. Type 1 subfamily. In terms of assembly, homodimer.

Its subcellular location is the cytoplasm. The enzyme catalyses tRNA(Asx) + L-aspartate + ATP = L-aspartyl-tRNA(Asx) + AMP + diphosphate. In terms of biological role, aspartyl-tRNA synthetase with relaxed tRNA specificity since it is able to aspartylate not only its cognate tRNA(Asp) but also tRNA(Asn). Reaction proceeds in two steps: L-aspartate is first activated by ATP to form Asp-AMP and then transferred to the acceptor end of tRNA(Asp/Asn). The chain is Aspartate--tRNA(Asp/Asn) ligase from Xanthobacter autotrophicus (strain ATCC BAA-1158 / Py2).